The following is a 176-amino-acid chain: Large ribosomal subunit protein uL10 (176 aa).

This sequence belongs to the universal ribosomal protein uL10 family. In terms of assembly, part of the ribosomal stalk of the 50S ribosomal subunit. The N-terminus interacts with L11 and the large rRNA to form the base of the stalk. The C-terminus forms an elongated spine to which L12 dimers bind in a sequential fashion forming a multimeric L10(L12)X complex.

Its function is as follows. Forms part of the ribosomal stalk, playing a central role in the interaction of the ribosome with GTP-bound translation factors. The protein is Large ribosomal subunit protein uL10 of Marinobacter nauticus (strain ATCC 700491 / DSM 11845 / VT8) (Marinobacter aquaeolei).